An 87-amino-acid polypeptide reads, in one-letter code: U3-theraphotoxin-Hhn1a 16 (87 aa).

Residues 1–24 (MVNMKASMFLTFAGLVLLFVVCYA) form the signal peptide. Residues 25–52 (SESEEKEFPKEMLSSIFAVDNDFKQGER) constitute a propeptide that is removed on maturation. Disulfide bonds link cysteine 54–cysteine 67, cysteine 61–cysteine 72, and cysteine 66–cysteine 79.

The protein belongs to the neurotoxin 10 (Hwtx-1) family. 51 (Hntx-8) subfamily. Hntx-8 sub-subfamily. Expressed by the venom gland.

It localises to the secreted. Its function is as follows. Ion channel inhibitor. This Cyriopagopus hainanus (Chinese bird spider) protein is U3-theraphotoxin-Hhn1a 16.